The primary structure comprises 364 residues: Homeobox protein KNOX3 (364 aa).

Residues threonine 13–glycine 49 form a disordered region. Over residues histidine 19 to leucine 29 the composition is skewed to polar residues. Positions glutamate 246–leucine 266 constitute an ELK domain. Positions serine 267 to threonine 330 form a DNA-binding region, homeobox; TALE-type.

The protein belongs to the TALE/KNOX homeobox family. In terms of assembly, binds DNA as a monomer. As to expression, the unit of inflorescence is the spikelet, which bears a fertile tract, the lemma, and the floret consisting of palea, two lodicules, three stamens and the pistil. The lemma is completed by the awn, an appendage homologous to the laminae of normal leaves. Expressed in the inflorescences and lemmas and at lower levels, in palea and vascular bundles.

Its subcellular location is the nucleus. Its function is as follows. May play a role in meristem formation and/or maintenance. Overexpression causes the hooded phenotype characterized by the appearance of an extra flower of inverse polarity on the lemma. Binds to the DNA sequence 5'-TGAC-3'. The chain is Homeobox protein KNOX3 (KNOX3) from Hordeum vulgare (Barley).